The primary structure comprises 357 residues: GTPase Obg (357 aa).

The region spanning 1 to 159 is the Obg domain; that stretch reads MKFVDEAFID…KSLKLELKVL (159 aa). In terms of domain architecture, OBG-type G spans 160 to 334; that stretch reads ADVGLLGMPN…LVQSIFQHVH (175 aa). GTP contacts are provided by residues 166-173, 191-195, 213-216, 284-287, and 315-317; these read GMPNAGKS, FTTLH, DIPG, NKLD, and SAL. Mg(2+)-binding residues include S173 and T193.

The protein belongs to the TRAFAC class OBG-HflX-like GTPase superfamily. OBG GTPase family. In terms of assembly, monomer. The cofactor is Mg(2+).

Its subcellular location is the cytoplasm. An essential GTPase which binds GTP, GDP and possibly (p)ppGpp with moderate affinity, with high nucleotide exchange rates and a fairly low GTP hydrolysis rate. Plays a role in control of the cell cycle, stress response, ribosome biogenesis and in those bacteria that undergo differentiation, in morphogenesis control. This is GTPase Obg from Acidovorax sp. (strain JS42).